The chain runs to 278 residues: Undecaprenyl-diphosphatase (278 aa).

8 consecutive transmembrane segments (helical) span residues 2-22 (ALVE…TEWL), 44-64 (AFME…VVLL), 85-105 (IEMW…GLLW), 113-133 (FYNY…FIVI), 150-170 (ITYT…IFPG), 189-209 (TVAA…ASAL), 223-243 (LMIL…SIKF), and 253-273 (FKIF…YFSA).

This sequence belongs to the UppP family.

The protein localises to the cell membrane. The enzyme catalyses di-trans,octa-cis-undecaprenyl diphosphate + H2O = di-trans,octa-cis-undecaprenyl phosphate + phosphate + H(+). In terms of biological role, catalyzes the dephosphorylation of undecaprenyl diphosphate (UPP). Confers resistance to bacitracin. This chain is Undecaprenyl-diphosphatase, found in Desulfitobacterium hafniense (strain DSM 10664 / DCB-2).